Consider the following 410-residue polypeptide: 3-phosphoshikimate 1-carboxyvinyltransferase (410 aa).

3-phosphoshikimate is bound by residues lysine 20, serine 21, and arginine 25. Residue lysine 20 coordinates phosphoenolpyruvate. Phosphoenolpyruvate-binding residues include glycine 87 and arginine 115. The 3-phosphoshikimate site is built by serine 157, serine 158, glutamine 159, serine 183, aspartate 293, and lysine 320. Glutamine 159 contacts phosphoenolpyruvate. Aspartate 293 functions as the Proton acceptor in the catalytic mechanism. The phosphoenolpyruvate site is built by arginine 324, arginine 365, and lysine 391.

This sequence belongs to the EPSP synthase family. In terms of assembly, monomer.

The protein resides in the cytoplasm. The enzyme catalyses 3-phosphoshikimate + phosphoenolpyruvate = 5-O-(1-carboxyvinyl)-3-phosphoshikimate + phosphate. It functions in the pathway metabolic intermediate biosynthesis; chorismate biosynthesis. Catalyzes the transfer of the enolpyruvyl moiety of phosphoenolpyruvate (PEP) to the 5-hydroxyl of shikimate-3-phosphate (S3P) to produce enolpyruvyl shikimate-3-phosphate and inorganic phosphate. In Thermoplasma volcanium (strain ATCC 51530 / DSM 4299 / JCM 9571 / NBRC 15438 / GSS1), this protein is 3-phosphoshikimate 1-carboxyvinyltransferase.